A 208-amino-acid polypeptide reads, in one-letter code: MRDIDSVMRLAPVMPVLVIEDIADAKPIAEALVAGGLNVLEVTLRTPCALEAIKIMKEVPGAVVGAGTVLNAKMLDQAQEAGCEFFVSPGLTADLGKHAVAQKAALLPGVANAADVMLGLDLGLDRFKFFPAENIGGLPALKSMASVFRQVRFCPTGGITPTSAPKYLENPSILCVGGSWVVPAGKPDVAKITALAKEASAFKRAAVA.

Catalysis depends on Glu41, which acts as the Proton acceptor. The pyruvate site is built by Arg45, Thr68, and Lys128. Lys128 acts as the Schiff-base intermediate with substrate in catalysis.

It belongs to the KHG/KDPG aldolase family. As to quaternary structure, homotrimer.

It localises to the cytoplasm. It carries out the reaction 2-dehydro-3-deoxy-6-phospho-D-gluconate = D-glyceraldehyde 3-phosphate + pyruvate. Its pathway is carbohydrate acid metabolism; 2-dehydro-3-deoxy-D-gluconate degradation; D-glyceraldehyde 3-phosphate and pyruvate from 2-dehydro-3-deoxy-D-gluconate: step 2/2. In terms of biological role, involved in the degradation of glucose via the Entner-Doudoroff pathway. Catalyzes the reversible, stereospecific retro-aldol cleavage of 2-keto-3-deoxy-6-phosphogluconate (KDPG) to pyruvate and D-glyceraldehyde-3-phosphate. The polypeptide is 2-dehydro-3-deoxy-phosphogluconate aldolase (Zymomonas mobilis subsp. mobilis (strain ATCC 31821 / ZM4 / CP4)).